The following is a 617-amino-acid chain: AUGMIN subunit 3 (617 aa).

Coiled-coil stretches lie at residues 107 to 140 (DATL…SSAL), 314 to 334 (LHSL…LYQK), and 481 to 504 (AIIQ…ENSL).

The protein belongs to the HAUS3 family. In terms of assembly, part of the augmin complex composed of 8 subunits. The complex acts on microtubules and interacts with gamma-tubulin in spindles and the phragmoplast. Interacts with AUG1.

It localises to the cytoplasm. The protein localises to the cytoskeleton. It is found in the spindle. The protein resides in the phragmoplast. Involved in microtubules reorganization during spindle and phragmoplast development. Required for gamma-tubulin localization during mitosis. The sequence is that of AUGMIN subunit 3 from Arabidopsis thaliana (Mouse-ear cress).